The following is a 392-amino-acid chain: Digeranylgeranylglycerophospholipid reductase (392 aa).

10 residues coordinate FAD: G15, E34, C45, A46, G48, R99, A123, D279, G291, and I292. An a 2,3-bis-O-(geranylgeranyl)-sn-glycerol 1-phospholipid-binding site is contributed by V370.

This sequence belongs to the geranylgeranyl reductase family. DGGGPL reductase subfamily. It depends on FAD as a cofactor.

The enzyme catalyses a 2,3-bis-O-phytanyl-sn-glycerol 1-phospholipid + 8 oxidized 2[4Fe-4S]-[ferredoxin] = a 2,3-bis-O-(geranylgeranyl)-sn-glycerol 1-phospholipid + 8 reduced 2[4Fe-4S]-[ferredoxin] + 16 H(+). It carries out the reaction 2,3-bis-O-(phytanyl)-sn-glycerol 1-phosphate + 8 oxidized 2[4Fe-4S]-[ferredoxin] = 2,3-bis-O-(geranylgeranyl)-sn-glycerol 1-phosphate + 8 reduced 2[4Fe-4S]-[ferredoxin] + 16 H(+). It catalyses the reaction a 2,3-bis-O-phytanyl-sn-glycerol 1-phospholipid + 8 A = a 2,3-bis-O-(geranylgeranyl)-sn-glycerol 1-phospholipid + 8 AH2. The catalysed reaction is CDP-2,3-bis-O-(geranylgeranyl)-sn-glycerol + 8 AH2 = CDP-2,3-bis-O-(phytanyl)-sn-glycerol + 8 A. The enzyme catalyses archaetidylserine + 8 AH2 = 2,3-bis-O-phytanyl-sn-glycero-3-phospho-L-serine + 8 A. It participates in membrane lipid metabolism; glycerophospholipid metabolism. Functionally, is involved in the reduction of 2,3-digeranylgeranylglycerophospholipids (unsaturated archaeols) into 2,3-diphytanylglycerophospholipids (saturated archaeols) in the biosynthesis of archaeal membrane lipids. Catalyzes the formation of archaetidic acid (2,3-di-O-phytanyl-sn-glyceryl phosphate) from 2,3-di-O-geranylgeranylglyceryl phosphate (DGGGP) via the hydrogenation of each double bond of the isoprenoid chains. Is also probably able to reduce double bonds of geranyl groups in CDP-2,3-bis-O-(geranylgeranyl)-sn-glycerol and archaetidylserine, thus acting at various stages in the biosynthesis of archaeal membrane lipids. This Methanocella arvoryzae (strain DSM 22066 / NBRC 105507 / MRE50) protein is Digeranylgeranylglycerophospholipid reductase.